The sequence spans 133 residues: Profilin Sal k 4.0101 (133 aa).

An intrachain disulfide couples C95 to C117.

It belongs to the profilin family. In terms of assembly, occurs in many kinds of cells as a complex with monomeric actin in a 1:1 ratio. As to expression, expressed in pollen.

It is found in the cytoplasm. The protein resides in the cytoskeleton. Binds to actin and affects the structure of the cytoskeleton. At high concentrations, profilin prevents the polymerization of actin, whereas it enhances it at low concentrations. The polypeptide is Profilin Sal k 4.0101 (Kali turgidum (Prickly saltwort)).